The chain runs to 240 residues: 2,3,4,5-tetrahydropyridine-2,6-dicarboxylate N-acetyltransferase (240 aa).

Belongs to the transferase hexapeptide repeat family. DapH subfamily.

It carries out the reaction (S)-2,3,4,5-tetrahydrodipicolinate + acetyl-CoA + H2O = L-2-acetamido-6-oxoheptanedioate + CoA. Its pathway is amino-acid biosynthesis; L-lysine biosynthesis via DAP pathway; LL-2,6-diaminopimelate from (S)-tetrahydrodipicolinate (acetylase route): step 1/3. In terms of biological role, catalyzes the transfer of an acetyl group from acetyl-CoA to tetrahydrodipicolinate. In Staphylococcus epidermidis (strain ATCC 35984 / DSM 28319 / BCRC 17069 / CCUG 31568 / BM 3577 / RP62A), this protein is 2,3,4,5-tetrahydropyridine-2,6-dicarboxylate N-acetyltransferase.